We begin with the raw amino-acid sequence, 145 residues long: 3-dehydroquinate dehydratase 1 (145 aa).

Y24 serves as the catalytic Proton acceptor. Substrate contacts are provided by N75, H81, and D88. The Proton donor role is filled by H101. Residues 102–103 (IS) and R112 each bind substrate.

It belongs to the type-II 3-dehydroquinase family. In terms of assembly, homododecamer.

It carries out the reaction 3-dehydroquinate = 3-dehydroshikimate + H2O. It functions in the pathway metabolic intermediate biosynthesis; chorismate biosynthesis; chorismate from D-erythrose 4-phosphate and phosphoenolpyruvate: step 3/7. Its function is as follows. Catalyzes a trans-dehydration via an enolate intermediate. The sequence is that of 3-dehydroquinate dehydratase 1 (aroQ1) from Agrobacterium fabrum (strain C58 / ATCC 33970) (Agrobacterium tumefaciens (strain C58)).